The sequence spans 80 residues: 14-3-3-like protein 1 (80 aa).

It belongs to the 14-3-3 family.

This chain is 14-3-3-like protein 1, found in Pseudotsuga menziesii (Douglas-fir).